A 373-amino-acid chain; its full sequence is Opsin Rh1 (373 aa).

Residues Met1–Trp49 lie on the Extracellular side of the membrane. Residue Asn20 is glycosylated (N-linked (GlcNAc...) asparagine). A helical transmembrane segment spans residues Ala50–Ile74. Over Phe75–Asn86 the chain is Cytoplasmic. Residues Leu87–Tyr112 traverse the membrane as a helical segment. The Extracellular segment spans residues Phe113 to Tyr126. A disulfide bridge links Cys123 with Cys200. Residues Ala127–Leu146 traverse the membrane as a helical segment. The Cytoplasmic segment spans residues Asp147–Leu165. Residues Ala166–Ser189 form a helical membrane-spanning segment. Residues Arg190–Ser213 lie on the Extracellular side of the membrane. N-linked (GlcNAc...) asparagine glycosylation occurs at Asn196. A helical transmembrane segment spans residues Tyr214–Val241. Topologically, residues Ser242–Lys276 are cytoplasmic. A helical membrane pass occupies residues Val277–Leu300. Residues Phe301–Thr307 are Extracellular-facing. The helical transmembrane segment at Pro308–Ser332 threads the bilayer. Position 319 is an N6-(retinylidene)lysine (Lys319). The Cytoplasmic segment spans residues His333–Ala373. Positions Asp354–Ala373 are disordered. A compositionally biased stretch (low complexity) spans Ser358–Ala373.

It belongs to the G-protein coupled receptor 1 family. Opsin subfamily. In terms of processing, phosphorylated on some or all of the serine and threonine residues present in the C-terminal region.

The protein localises to the cell projection. It localises to the rhabdomere membrane. Functionally, visual pigments are the light-absorbing molecules that mediate vision. They consist of an apoprotein, opsin, covalently linked to cis-retinal. This Drosophila melanogaster (Fruit fly) protein is Opsin Rh1 (ninaE).